The primary structure comprises 229 residues: MTLAKPGSGAEFRLNNKANLKSRLVRDLSHAAGQEPEGSESLDPAMVAAVETLLRGIGEDPQREGLKKTPERVVAALKFLTSGYRQSLEDLINGAIFDEGHDEMVLLRDITLFSLCEHHLLPFIGKAHVAYIPRQKVVGLSKIARIVEMYSRRLQVQERLTRQIAEALMTMLDPYGVGVVIEATHMCMVMRGVQKPGSWTVTSSMVGVFQEDPRTREEFLSLIRHPSNL.

3 residues coordinate Zn(2+): Cys-116, His-119, and Cys-187.

It belongs to the GTP cyclohydrolase I family. As to quaternary structure, toroid-shaped homodecamer, composed of two pentamers of five dimers.

It carries out the reaction GTP + H2O = 7,8-dihydroneopterin 3'-triphosphate + formate + H(+). Its pathway is cofactor biosynthesis; 7,8-dihydroneopterin triphosphate biosynthesis; 7,8-dihydroneopterin triphosphate from GTP: step 1/1. This Synechococcus sp. (strain JA-3-3Ab) (Cyanobacteria bacterium Yellowstone A-Prime) protein is GTP cyclohydrolase 1.